A 337-amino-acid chain; its full sequence is Glyceraldehyde-3-phosphate dehydrogenase 1, cytosolic (337 aa).

NAD(+) is bound by residues 13 to 14, Asp35, and Arg82; that span reads RI. D-glyceraldehyde 3-phosphate is bound by residues 153–155, Thr184, 213–214, and Arg236; these read SCT and TG. The active-site Nucleophile is Cys154. Asn318 contributes to the NAD(+) binding site.

It belongs to the glyceraldehyde-3-phosphate dehydrogenase family. As to quaternary structure, homotetramer.

It is found in the cytoplasm. The enzyme catalyses D-glyceraldehyde 3-phosphate + phosphate + NAD(+) = (2R)-3-phospho-glyceroyl phosphate + NADH + H(+). It participates in carbohydrate degradation; glycolysis; pyruvate from D-glyceraldehyde 3-phosphate: step 1/5. Key enzyme in glycolysis that catalyzes the first step of the pathway by converting D-glyceraldehyde 3-phosphate (G3P) into 3-phospho-D-glyceroyl phosphate. Essential for the maintenance of cellular ATP levels and carbohydrate metabolism. This Hordeum vulgare (Barley) protein is Glyceraldehyde-3-phosphate dehydrogenase 1, cytosolic (GAPC).